Here is a 400-residue protein sequence, read N- to C-terminus: Lipase member N (400 aa).

The signal sequence occupies residues 1-19 (MPMMWLFLTTACLIPGTLS). An AB hydrolase-1 domain is found at 81–381 (PVVYMQHALF…DWNHFDFVWG (301 aa)). Residue Ser175 is the Nucleophile of the active site. An intrachain disulfide couples Cys249 to Cys258. A glycan (N-linked (GlcNAc...) asparagine) is linked at Asn274. Catalysis depends on charge relay system residues Asp346 and His375.

It belongs to the AB hydrolase superfamily. Lipase family. In terms of tissue distribution, highly expressed in the epidermis. Also detected in other tissues, although at much lower levels, including liver and kidney.

It is found in the secreted. The enzyme catalyses a sterol ester + H2O = a sterol + a fatty acid + H(+). It catalyses the reaction a triacylglycerol + H2O = a 1,2-diacylglycerol + a fatty acid + H(+). The catalysed reaction is a triacylglycerol + H2O = a diacylglycerol + a fatty acid + H(+). It carries out the reaction a cholesterol ester + H2O = cholesterol + a fatty acid + H(+). In terms of biological role, plays a highly specific role in the last step of keratinocyte differentiation. Contains two distinct domains: the alpha/beta hydrolase fold and the abhydrolase-associated lipase region, also features the consensus sequence of the active site of a genuine lipase. May have an essential function in lipid metabolism of the most differentiated epidermal layers. This chain is Lipase member N (Lipn), found in Mus musculus (Mouse).